A 222-amino-acid polypeptide reads, in one-letter code: Chymotrypsin-1 (222 aa).

The Peptidase S1 domain maps to Ile1–Lys221. Cysteines 26 and 42 form a disulfide. Residues His41 and Asp87 each act as charge relay system in the active site. Cystine bridges form between Cys151/Cys164 and Cys174/Cys198. Residue Ser178 is the Charge relay system of the active site.

The protein belongs to the peptidase S1 family.

The protein localises to the secreted. It localises to the extracellular space. The catalysed reaction is Preferential cleavage: Tyr-|-Xaa, Trp-|-Xaa, Phe-|-Xaa, Leu-|-Xaa.. In Solenopsis invicta (Red imported fire ant), this protein is Chymotrypsin-1.